A 232-amino-acid polypeptide reads, in one-letter code: Small ribosomal subunit protein uS2 (232 aa).

Belongs to the universal ribosomal protein uS2 family.

This is Small ribosomal subunit protein uS2 from Alkaliphilus oremlandii (strain OhILAs) (Clostridium oremlandii (strain OhILAs)).